Reading from the N-terminus, the 651-residue chain is ATP-dependent RNA helicase DBP6 (651 aa).

The disordered stretch occupies residues 1-114 (MFAARFDPTK…ADVDDDGKHT (114 aa)). A compositionally biased stretch (basic and acidic residues) spans 7–17 (DPTKVVREEPK). The span at 27–42 (DDVESSDSDQDIEDGV) shows a compositional bias: acidic residues. Residues 49–60 (KEQSGTDVTTTR) show a composition bias toward polar residues. Positions 69–85 (DSESESESESDSDDEMN) are enriched in acidic residues. The span at 100-113 (VSSKDADVDDDGKH) shows a compositional bias: basic and acidic residues. Positions 216 to 224 (TFPIQTAML) match the Q motif motif. Positions 240–420 (KNFTRRIGDI…DLQLYNPTLF (181 aa)) constitute a Helicase ATP-binding domain. 253–260 (ASTGSGKT) is an ATP binding site. The DEAD box signature appears at 360–363 (DEAD). One can recognise a Helicase C-terminal domain in the interval 452-611 (YLLKLLEQLS…CKPISYNDSY (160 aa)).

It belongs to the DEAD box helicase family. DDX51/DBP6 subfamily. In terms of assembly, associated with pre-ribosomal particles.

It is found in the nucleus. The protein resides in the nucleolus. The catalysed reaction is ATP + H2O = ADP + phosphate + H(+). ATP-binding RNA helicase involved in the biogenesis of 60S ribosomal subunits and is required for the normal formation of 25S and 5.8S rRNAs. This chain is ATP-dependent RNA helicase DBP6 (DBP6), found in Candida glabrata (strain ATCC 2001 / BCRC 20586 / JCM 3761 / NBRC 0622 / NRRL Y-65 / CBS 138) (Yeast).